A 135-amino-acid chain; its full sequence is Large ribosomal subunit protein eL27z (135 aa).

Belongs to the eukaryotic ribosomal protein eL27 family.

This chain is Large ribosomal subunit protein eL27z (RPL27A), found in Arabidopsis thaliana (Mouse-ear cress).